A 136-amino-acid polypeptide reads, in one-letter code: Aspartate 1-decarboxylase (136 aa).

The Schiff-base intermediate with substrate; via pyruvic acid role is filled by serine 25. Serine 25 carries the post-translational modification Pyruvic acid (Ser). Threonine 57 provides a ligand contact to substrate. Residue tyrosine 58 is the Proton donor of the active site. Position 73-75 (73-75) interacts with substrate; that stretch reads GAA. The tract at residues 117–136 is disordered; that stretch reads IFQLGEETTPEEAPSLEQRN.

The protein belongs to the PanD family. As to quaternary structure, heterooctamer of four alpha and four beta subunits. The cofactor is pyruvate. In terms of processing, is synthesized initially as an inactive proenzyme, which is activated by self-cleavage at a specific serine bond to produce a beta-subunit with a hydroxyl group at its C-terminus and an alpha-subunit with a pyruvoyl group at its N-terminus.

It localises to the cytoplasm. It catalyses the reaction L-aspartate + H(+) = beta-alanine + CO2. It functions in the pathway cofactor biosynthesis; (R)-pantothenate biosynthesis; beta-alanine from L-aspartate: step 1/1. Catalyzes the pyruvoyl-dependent decarboxylation of aspartate to produce beta-alanine. This chain is Aspartate 1-decarboxylase, found in Chloroherpeton thalassium (strain ATCC 35110 / GB-78).